The primary structure comprises 349 residues: Isopentenyl-diphosphate delta-isomerase (349 aa).

Position 6–7 (6–7) interacts with substrate; the sequence is RK. Residues 62–64, serine 93, and asparagine 122 contribute to the FMN site; that span reads AMT. Residue glutamine 152 coordinates substrate. Glutamate 153 lines the Mg(2+) pocket. FMN contacts are provided by residues lysine 184, threonine 214, 258-259, and 280-281; these read GG and AG.

The protein belongs to the IPP isomerase type 2 family. In terms of assembly, homooctamer. Dimer of tetramers. FMN is required as a cofactor. The cofactor is NADPH. It depends on Mg(2+) as a cofactor.

It is found in the cytoplasm. It catalyses the reaction isopentenyl diphosphate = dimethylallyl diphosphate. Its function is as follows. Involved in the biosynthesis of isoprenoids. Catalyzes the 1,3-allylic rearrangement of the homoallylic substrate isopentenyl (IPP) to its allylic isomer, dimethylallyl diphosphate (DMAPP). This Bacillus cereus (strain AH187) protein is Isopentenyl-diphosphate delta-isomerase.